An 81-amino-acid polypeptide reads, in one-letter code: Acyl carrier protein (81 aa).

The region spanning 2-80 is the Carrier domain; it reads ASKDEILAGL…DAVNFIDNAQ (79 aa). Ser-40 is modified (O-(pantetheine 4'-phosphoryl)serine).

It belongs to the acyl carrier protein (ACP) family. Post-translationally, 4'-phosphopantetheine is transferred from CoA to a specific serine of apo-ACP by AcpS. This modification is essential for activity because fatty acids are bound in thioester linkage to the sulfhydryl of the prosthetic group.

The protein localises to the cytoplasm. Its pathway is lipid metabolism; fatty acid biosynthesis. In terms of biological role, carrier of the growing fatty acid chain in fatty acid biosynthesis. In Kocuria rhizophila (strain ATCC 9341 / DSM 348 / NBRC 103217 / DC2201), this protein is Acyl carrier protein.